The primary structure comprises 349 residues: GMP reductase (349 aa).

Residue Leu108–Ala131 coordinates NADP(+). K(+)-binding residues include Gly181 and Gly183. Catalysis depends on Cys186, which acts as the Thioimidate intermediate. Ile216–Val239 lines the NADP(+) pocket.

Belongs to the IMPDH/GMPR family. GuaC type 1 subfamily. As to quaternary structure, homotetramer.

It carries out the reaction IMP + NH4(+) + NADP(+) = GMP + NADPH + 2 H(+). Functionally, catalyzes the irreversible NADPH-dependent deamination of GMP to IMP. It functions in the conversion of nucleobase, nucleoside and nucleotide derivatives of G to A nucleotides, and in maintaining the intracellular balance of A and G nucleotides. In Buchnera aphidicola subsp. Schizaphis graminum (strain Sg), this protein is GMP reductase.